A 218-amino-acid polypeptide reads, in one-letter code: Peroxiredoxin-like 2A (218 aa).

Residues 3 to 101 are thioredoxin fold; the sequence is MWSIGAGAIG…DELGVPLYAV (99 aa). Active-site redox-active residues include Cys74 and Cys77.

The protein belongs to the peroxiredoxin-like PRXL2 family. PRXL2A subfamily.

Its subcellular location is the cytoplasm. The protein resides in the secreted. Involved in redox regulation of the cell. Acts as an antioxidant. Inhibits TNFSF11-induced NFKB1 and JUN activation and osteoclast differentiation. May affect bone resorption and help to maintain bone mass. Acts as a negative regulator of macrophage-mediated inflammation by inhibiting macrophage production of inflammatory cytokines, probably through suppression of the MAPK signaling pathway. The protein is Peroxiredoxin-like 2A (PRXL2A) of Bos taurus (Bovine).